Reading from the N-terminus, the 61-residue chain is Small ribosomal subunit protein uS14 (61 aa).

Residues cysteine 24, cysteine 27, cysteine 40, and cysteine 43 each coordinate Zn(2+).

This sequence belongs to the universal ribosomal protein uS14 family. Zinc-binding uS14 subfamily. As to quaternary structure, part of the 30S ribosomal subunit. Contacts proteins S3 and S10. Requires Zn(2+) as cofactor.

Binds 16S rRNA, required for the assembly of 30S particles and may also be responsible for determining the conformation of the 16S rRNA at the A site. The protein is Small ribosomal subunit protein uS14 of Herpetosiphon aurantiacus (strain ATCC 23779 / DSM 785 / 114-95).